Consider the following 263-residue polypeptide: Caveolae-associated protein 3 (263 aa).

The interaction with CAVIN1 stretch occupies residues 1–84; it reads MGESALEPGP…SNTLAQLLAK (84 aa). Positions 20 to 78 are leucine-zipper; that stretch reads VHAVTVVTLLEKLATMLEALRERQGGLAERQGGLAGSVRRIQSGLGALSRSHDTTSNTL. Phosphoserine is present on residues serine 62 and serine 70. Lysine 128 participates in a covalent cross-link: Glycyl lysine isopeptide (Lys-Gly) (interchain with G-Cter in SUMO2). Residues 135-203 are interaction with CAV1; that stretch reads ARAFQKAPEL…SSRKGSEAAQ (69 aa). Residues 141-263 are disordered; the sequence is APELLGPEDQ…RPVLQIESAA (123 aa). A compositionally biased stretch (acidic residues) spans 157 to 170; sequence QPEDEVGESSDEEP. Residues serine 165, serine 166, serine 173, and serine 199 each carry the phosphoserine modification. The segment covering 219 to 234 has biased composition (low complexity); the sequence is EGPAEGQPAAQPAMEP.

This sequence belongs to the CAVIN family. As to quaternary structure, component of the CAVIN complex composed of CAVIN1, CAVIN2, CAVIN3 and CAVIN4. Interacts with PRKCD and with phosphatidylserine. Phosphatidylserine may form a bridge between PKC and PKC-binding partners and stabilize the binding. Interacts with PER2. Interacts with CAVIN1 and EPS15L1. Interacts (via leucine-zipper domain) with CAV1 in a cholesterol-sensitive manner. In terms of processing, in vitro, phosphorylated by PRKCD.

Its subcellular location is the cytoplasm. The protein localises to the membrane. The protein resides in the caveola. It is found in the cytosol. Its function is as follows. Regulates the traffic and/or budding of caveolae. Plays a role in caveola formation in a tissue-specific manner. Required for the formation of caveolae in smooth muscle but not in the lung and heart endothelial cells. Regulates the equilibrium between cell surface-associated and cell surface-dissociated caveolae by promoting the rapid release of caveolae from the cell surface. Plays a role in the regulation of the circadian clock. Modulates the period length and phase of circadian gene expression and also regulates expression and interaction of the core clock components PER1/2 and CRY1/2. Seems to have an immune potentiation function, especially in the glioma. The sequence is that of Caveolae-associated protein 3 from Rattus norvegicus (Rat).